The sequence spans 230 residues: Large ribosomal subunit protein uL1 (230 aa).

The protein belongs to the universal ribosomal protein uL1 family. Part of the 50S ribosomal subunit.

In terms of biological role, binds directly to 23S rRNA. The L1 stalk is quite mobile in the ribosome, and is involved in E site tRNA release. Functionally, protein L1 is also a translational repressor protein, it controls the translation of the L11 operon by binding to its mRNA. The protein is Large ribosomal subunit protein uL1 of Methylobacillus flagellatus (strain ATCC 51484 / DSM 6875 / VKM B-1610 / KT).